We begin with the raw amino-acid sequence, 122 residues long: MSDWSGSVPANAENGKSTGLILKQGDTISVVAHGWVKYGRDNVEWAAPDGPVPNNPQPSSIATLVAKIANKKFAIGNGVLHKTVPVDGELILLFNDVPGTFGDNSGEFQVEVIIESRYSPLK.

A Ca(2+)-binding site is contributed by Y38. An alpha-D-galactoside-binding residues include E44, Q57, and D96. Residues D96, T100, D103, and N104 each coordinate Ca(2+). D103 contacts an alpha-D-galactoside.

This sequence belongs to the LecA/PllA lectin family. In terms of assembly, homotetramer.

Lectin that specifically binds alpha-galactoside-terminating glycoconjugates. Shows high apparent binding to the alpha-Gal epitope (Gal-alpha-1,3-Gal-beta-1,4-GlcNAc terminating glycans) as well as to Gal-alpha-1,4-GlcNAc and Gal-alpha-1,3-GalNAc. Gal-alpha-1,3-GalNAc may be one natural ligand bound by PllA both in the nematode symbiont and in infected insects. The sequence is that of Lectin A from Photorhabdus laumondii subsp. laumondii (strain DSM 15139 / CIP 105565 / TT01) (Photorhabdus luminescens subsp. laumondii).